The primary structure comprises 770 residues: Probable capsid and replication-associated protein (770 aa).

2 disordered regions span residues 645–682 (QRMQ…QKES) and 697–717 (WEDS…TQTV). Residues 646–656 (RMQQQPTTTDI) are compositionally biased toward polar residues. The span at 666–681 (RDTEVYHSSQEGEQKE) shows a compositional bias: basic and acidic residues. Low complexity predominate over residues 703–717 (EESGSQSSEEETQTV).

Belongs to the anelloviridae capsid protein family.

It localises to the virion. Functionally, may self assemble to form an icosahedral capsid. Presumably essential to initiate and monitor viral genome replication by a rolling circle mechanism. The protein is Probable capsid and replication-associated protein of Homo sapiens (Human).